Consider the following 2104-residue polypeptide: Phenolphthiocerol synthesis polyketide synthase type I Pks15/1 (2104 aa).

The region spanning T41 to E464 is the Ketosynthase family 3 (KS3) domain. Residues C211, H346, and H386 each act as for beta-ketoacyl synthase activity in the active site. The segment at T571–V887 is acyltransferase. Residue S662 is the For acyltransferase activity of the active site. Residues H935 to S1057 are N-terminal hotdog fold. Residues H935–L1095 form a dehydratase region. The PKS/mFAS DH domain occupies H935–R1207. H967 (proton acceptor; for dehydratase activity) is an active-site residue. The tract at residues A1069–R1207 is C-terminal hotdog fold. Catalysis depends on D1128, which acts as the Proton donor; for dehydratase activity. Residues G1400 to L1705 are enoylreductase. NADP(+) contacts are provided by residues V1530–A1547 and T1719–A1734. Residues A1718–S1899 are beta-ketoacyl reductase (KR). The 76-residue stretch at D2004–I2079 folds into the Carrier domain. S2039 is modified (O-(pantetheine 4'-phosphoryl)serine). Residues D2081–A2104 are disordered.

It belongs to the thiolase-like superfamily. Beta-ketoacyl-ACP synthases family. It depends on pantetheine 4'-phosphate as a cofactor.

It carries out the reaction a fatty acyl-[ACP] + malonyl-[ACP] + H(+) = a 3-oxoacyl-[ACP] + holo-[ACP] + CO2. It functions in the pathway lipid metabolism; fatty acid biosynthesis. Functionally, catalyzes the elongation by iterative transfer of p-hydroxybenzoyl group from FadD22 (pHBA-S-FAdD22) to form p-hydroxyphenylalkanoate (pHPA) intermediates during phenolphthiocerol (PPOL) biosynthesis. PPOL is an important intermediate in the biosynthesis of phenolic glycolipid (mycosid B). The protein is Phenolphthiocerol synthesis polyketide synthase type I Pks15/1 (pks15/1) of Mycobacterium marinum (strain ATCC BAA-535 / M).